A 473-amino-acid chain; its full sequence is Photosystem II CP43 reaction center protein (473 aa).

Positions 1 to 14 are excised as a propeptide; it reads MKILYSQRRFYHVE. The next 5 membrane-spanning stretches (helical) occupy residues 69-93, 134-155, 178-200, 255-275, and 291-312; these read LFEV…PHLA, LIGP…RDKN, KAMF…RYIN, KPFG…LSYS, and WYNN…ASQA. [CaMn4O5] cluster is bound at residue E367. The helical transmembrane segment at 447–471 threads the bilayer; sequence RARAAAAGFEKGINRENEPVLSMKL.

The protein belongs to the PsbB/PsbC family. PsbC subfamily. As to quaternary structure, PSII is composed of 1 copy each of membrane proteins PsbA, PsbB, PsbC, PsbD, PsbE, PsbF, PsbH, PsbI, PsbJ, PsbK, PsbL, PsbM, PsbT, PsbY, PsbZ, Psb30/Ycf12, at least 3 peripheral proteins of the oxygen-evolving complex and a large number of cofactors. It forms dimeric complexes. Requires Binds multiple chlorophylls and provides some of the ligands for the Ca-4Mn-5O cluster of the oxygen-evolving complex. It may also provide a ligand for a Cl- that is required for oxygen evolution. PSII binds additional chlorophylls, carotenoids and specific lipids. as cofactor.

The protein resides in the plastid. Its subcellular location is the chloroplast thylakoid membrane. Functionally, one of the components of the core complex of photosystem II (PSII). It binds chlorophyll and helps catalyze the primary light-induced photochemical processes of PSII. PSII is a light-driven water:plastoquinone oxidoreductase, using light energy to abstract electrons from H(2)O, generating O(2) and a proton gradient subsequently used for ATP formation. The chain is Photosystem II CP43 reaction center protein from Galdieria sulphuraria (Red alga).